Here is a 141-residue protein sequence, read N- to C-terminus: ATP synthase epsilon chain 1 (141 aa).

It belongs to the ATPase epsilon chain family. F-type ATPases have 2 components, CF(1) - the catalytic core - and CF(0) - the membrane proton channel. CF(1) has five subunits: alpha(3), beta(3), gamma(1), delta(1), epsilon(1). CF(0) has three main subunits: a, b and c.

It is found in the cell inner membrane. Its function is as follows. Produces ATP from ADP in the presence of a proton gradient across the membrane. The sequence is that of ATP synthase epsilon chain 1 from Thiobacillus denitrificans (strain ATCC 25259 / T1).